Reading from the N-terminus, the 280-residue chain is MSDRDQIEPVTNALDAESDSSDDFGNFSDASVENDLYNQNSTLTTSSESVVDNCLNKILPKGEFDLEEETIKNDCFKLSKLIEDERPHVIYEQLVQLDPVLQPFIWNKSHIRRNLLHILRLSDNNGSEGVGTKREEEPLNDELFKRICDAVEKNEQTATGLFLRDNFKIDYTPPMTLKSLQKEEEREQEQHIPQLLMADFTSMDEESLRQYHDTLCQSIDFLVSKSRSLKKQQRDLLKDKTTFENVVTNLTGHTQRLQRDEIALYNKKRNKKKRFSWVGY.

Residues 1 to 26 (MSDRDQIEPVTNALDAESDSSDDFGN) are disordered. Residues 19 to 30 (DSSDDFGNFSDA) carry the Ear-binding motif motif.

Interacts with the clathrin-associated adapter complex AP-1. Interacts with LAA1.

Its subcellular location is the cytoplasmic vesicle. It is found in the clathrin-coated vesicle. Functionally, involved in localization of clathrin-associated adapter complex (AP-1) and subsequent AP-1-mediated clathrin-coated vesicle cargo loading. Directly mediates the interaction between LAA1 and AP-1 which is required for AP-1 localization. In complex with LAA1, cooperates with the small GTPase ARF1 and the phosphatidyl-inositol-4-phosphate (PI4P) synthesis to confer temporal specificity to AP-1 recruitment. In Saccharomyces cerevisiae (strain ATCC 204508 / S288c) (Baker's yeast), this protein is Clathrin adapter accessory protein LAA2.